Reading from the N-terminus, the 320-residue chain is (+)-corvol ether B synthase/(+)-corvol ether A synthase ((2E,6E)-farnesyl diphosphate cyclizing) (320 aa).

Residues Asp-78 and Asp-83 each contribute to the Mg(2+) site. Residues 78 to 83 (DDLFVD) carry the DDXXXD motif motif. Arg-171 provides a ligand contact to substrate. Mg(2+) contacts are provided by Asn-217, Ser-221, and Glu-225.

The protein belongs to the terpene synthase family. Mg(2+) serves as cofactor.

The enzyme catalyses (2E,6E)-farnesyl diphosphate + H2O = (+)-corvol ether B + diphosphate. The catalysed reaction is (2E,6E)-farnesyl diphosphate + H2O = (+)-corvol ether A + diphosphate. It participates in secondary metabolite biosynthesis; terpenoid biosynthesis. Catalyzes the conversion of (2E,6E)-farnesyl diphosphate (FPP) into (+)-corvol ether A and (+)-corvol ether B via a 1,10-cyclization, which requires isomerization of FPP to nerolidyl diphosphate (NPP) and then abstraction of the pyrophosphate from intermediate NPP leading to a (E,Z)-germacradienyl (helminthogermacradienyl) cation. The preferred substrate is (2E,6E)-farnesyl diphosphate (FPP), however geranyl diphosphate (GPP) is also able to produce small amounts of several acyclic and cyclic monoterpenes, with linalool as the main product. The polypeptide is (+)-corvol ether B synthase/(+)-corvol ether A synthase ((2E,6E)-farnesyl diphosphate cyclizing) (Kitasatospora setae (strain ATCC 33774 / DSM 43861 / JCM 3304 / KCC A-0304 / NBRC 14216 / KM-6054) (Streptomyces setae)).